A 370-amino-acid chain; its full sequence is MTSPTNSTMLTYTTNNYYDDDYYEYSTITDYYNTINNDITSSSVIKAFDNNCTFLEDTKYHIIVIHIILFLLGSIGNIFVVSLIAFKRNKSITDIYILNLSMSDCIFVFQIPFIVYSKLDQWIFGNILCKIMSVLYYVGFFSNMFIITLMSIDRYFAIVHPIKRQPYRTKRIGILMCCSAWLLSLILSSPVSKLYENIPHMSKDIYQCTLTNENDSIIAFIKRLMQIEITILGFLIPIIIFVYCYYRIFTTVVRLRNRRKYKSIKIVLMIVVCSLICWIPLYIVLMIATIVSLYTSNIFRHLCLYLNLAYAITFSETISLARCCINPIIYTLIGEHVRSRISSICSCIYRDNRIRKKLFSRKSSSSSNII.

Topologically, residues 1-61 are extracellular; it reads MTSPTNSTML…CTFLEDTKYH (61 aa). Asparagine 6 and asparagine 51 each carry an N-linked (GlcNAc...) asparagine; by host glycan. Residues 62 to 82 form a helical membrane-spanning segment; that stretch reads IIVIHIILFLLGSIGNIFVVS. Residues 83–94 are Cytoplasmic-facing; it reads LIAFKRNKSITD. Residues 95–115 traverse the membrane as a helical segment; the sequence is IYILNLSMSDCIFVFQIPFIV. Residues 116–131 lie on the Extracellular side of the membrane; it reads YSKLDQWIFGNILCKI. Residues 132–152 form a helical membrane-spanning segment; it reads MSVLYYVGFFSNMFIITLMSI. The Cytoplasmic segment spans residues 153 to 171; sequence DRYFAIVHPIKRQPYRTKR. Residues 172–192 traverse the membrane as a helical segment; that stretch reads IGILMCCSAWLLSLILSSPVS. Residues 193-223 lie on the Extracellular side of the membrane; sequence KLYENIPHMSKDIYQCTLTNENDSIIAFIKR. A helical membrane pass occupies residues 224 to 244; sequence LMQIEITILGFLIPIIIFVYC. Residues 245 to 265 lie on the Cytoplasmic side of the membrane; sequence YYRIFTTVVRLRNRRKYKSIK. The helical transmembrane segment at 266–286 threads the bilayer; it reads IVLMIVVCSLICWIPLYIVLM. Residues 287–300 are Extracellular-facing; that stretch reads IATIVSLYTSNIFR. A helical transmembrane segment spans residues 301–321; that stretch reads HLCLYLNLAYAITFSETISLA. Over 322-370 the chain is Cytoplasmic; it reads RCCINPIIYTLIGEHVRSRISSICSCIYRDNRIRKKLFSRKSSSSSNII.

It belongs to the G-protein coupled receptor 1 family.

The protein resides in the host cell membrane. Putative chemokine receptor. The sequence is that of G-protein coupled receptor homolog K2 from Sus scrofa (Pig).